Reading from the N-terminus, the 319-residue chain is Ribosomal RNA large subunit methyltransferase F (319 aa).

The protein belongs to the methyltransferase superfamily. METTL16/RlmF family.

Its subcellular location is the cytoplasm. It carries out the reaction adenosine(1618) in 23S rRNA + S-adenosyl-L-methionine = N(6)-methyladenosine(1618) in 23S rRNA + S-adenosyl-L-homocysteine + H(+). Specifically methylates the adenine in position 1618 of 23S rRNA. This chain is Ribosomal RNA large subunit methyltransferase F, found in Aliivibrio fischeri (strain ATCC 700601 / ES114) (Vibrio fischeri).